Here is an 89-residue protein sequence, read N- to C-terminus: Small ribosomal subunit protein uS15 (89 aa).

This sequence belongs to the universal ribosomal protein uS15 family. As to quaternary structure, part of the 30S ribosomal subunit. Forms a bridge to the 50S subunit in the 70S ribosome, contacting the 23S rRNA.

In terms of biological role, one of the primary rRNA binding proteins, it binds directly to 16S rRNA where it helps nucleate assembly of the platform of the 30S subunit by binding and bridging several RNA helices of the 16S rRNA. Functionally, forms an intersubunit bridge (bridge B4) with the 23S rRNA of the 50S subunit in the ribosome. The chain is Small ribosomal subunit protein uS15 from Pseudoalteromonas atlantica (strain T6c / ATCC BAA-1087).